We begin with the raw amino-acid sequence, 201 residues long: Recombination protein RecR (201 aa).

The C4-type zinc finger occupies 57–72; that stretch reads CTHCRTFTEEESCAIC. In terms of domain architecture, Toprim spans 81–176; sequence GFLCVVEQPS…KVSRIAHGIP (96 aa).

The protein belongs to the RecR family.

Its function is as follows. May play a role in DNA repair. It seems to be involved in an RecBC-independent recombinational process of DNA repair. It may act with RecF and RecO. In Histophilus somni (strain 129Pt) (Haemophilus somnus), this protein is Recombination protein RecR.